We begin with the raw amino-acid sequence, 69 residues long: MFGLGGQELILILMIILLLFGAKKLPELAKGLGKGMKEFKKAQNEMEDEFNKAMDDETPKKKDFGPDRE.

Residues 1-21 (MFGLGGQELILILMIILLLFG) form a helical membrane-spanning segment. The segment at 49-69 (EFNKAMDDETPKKKDFGPDRE) is disordered.

The protein belongs to the TatA/E family. In terms of assembly, forms a complex with TatC.

The protein resides in the cell inner membrane. In terms of biological role, part of the twin-arginine translocation (Tat) system that transports large folded proteins containing a characteristic twin-arginine motif in their signal peptide across membranes. TatA could form the protein-conducting channel of the Tat system. The chain is Sec-independent protein translocase protein TatA from Chlorobium luteolum (strain DSM 273 / BCRC 81028 / 2530) (Pelodictyon luteolum).